The primary structure comprises 210 residues: MNKKKRYEILSILSRNNPEPKIELFFSSDFELLLSVILSAQSTDFIVNKTTKILFKIANTPETIFLLGLERLKNYIKDIGLYNTKALNIIRTSFIILTKYNSIVPNNRIELESLPGVGRKTANIILNILFKKKTIAVDTHVFRVCNRTNFAKGKNVKIVEEKLIKVVPSIFKLNFHSWFILHGRYICTARKIKCNICLIFKLCEFKQKIF.

Residues 108 to 127 form the HhH domain; the sequence is RIELESLPGVGRKTANIILN. The [4Fe-4S] cluster site is built by C187, C194, C197, and C203.

The protein belongs to the Nth/MutY family. [4Fe-4S] cluster is required as a cofactor.

It catalyses the reaction 2'-deoxyribonucleotide-(2'-deoxyribose 5'-phosphate)-2'-deoxyribonucleotide-DNA = a 3'-end 2'-deoxyribonucleotide-(2,3-dehydro-2,3-deoxyribose 5'-phosphate)-DNA + a 5'-end 5'-phospho-2'-deoxyribonucleoside-DNA + H(+). DNA repair enzyme that has both DNA N-glycosylase activity and AP-lyase activity. The DNA N-glycosylase activity releases various damaged pyrimidines from DNA by cleaving the N-glycosidic bond, leaving an AP (apurinic/apyrimidinic) site. The AP-lyase activity cleaves the phosphodiester bond 3' to the AP site by a beta-elimination, leaving a 3'-terminal unsaturated sugar and a product with a terminal 5'-phosphate. This Buchnera aphidicola subsp. Acyrthosiphon pisum (strain APS) (Acyrthosiphon pisum symbiotic bacterium) protein is Endonuclease III.